Consider the following 319-residue polypeptide: uncharacterized protein (319 aa).

The signal sequence occupies residues 1–27 (MYKKFVPFAVFLFLFFVSFEMMENPHA). Positions 130–306 (PMVAFLINVA…QIKDKGYALG (177 aa)) constitute a NodB homology domain.

The protein belongs to the polysaccharide deacetylase family.

This is an uncharacterized protein from Bacillus subtilis (strain 168).